The sequence spans 290 residues: Cell division protein ZipA (290 aa).

A topological domain (periplasmic) is located at residue methionine 1. A helical membrane pass occupies residues 2-22 (DIGLREWLIVIGLIVIAGILF). The Cytoplasmic segment spans residues 23-290 (DGWRRMRGGK…HERRSLMQKR (268 aa)). Residues 66-143 (REPSFDEQDL…REKAPSVAAA (78 aa)) are disordered. A compositionally biased stretch (basic and acidic residues) spans 81–99 (REGKERKGGKRQDEPRQGD). The segment covering 100-114 (LDLDEGMALEADPSD) has biased composition (acidic residues).

This sequence belongs to the ZipA family. In terms of assembly, interacts with FtsZ via their C-terminal domains.

It is found in the cell inner membrane. Functionally, essential cell division protein that stabilizes the FtsZ protofilaments by cross-linking them and that serves as a cytoplasmic membrane anchor for the Z ring. Also required for the recruitment to the septal ring of downstream cell division proteins. The protein is Cell division protein ZipA of Pseudomonas paraeruginosa (strain DSM 24068 / PA7) (Pseudomonas aeruginosa (strain PA7)).